The sequence spans 219 residues: Probable nicotinate-nucleotide adenylyltransferase (219 aa).

This sequence belongs to the NadD family.

The enzyme catalyses nicotinate beta-D-ribonucleotide + ATP + H(+) = deamido-NAD(+) + diphosphate. Its pathway is cofactor biosynthesis; NAD(+) biosynthesis; deamido-NAD(+) from nicotinate D-ribonucleotide: step 1/1. Functionally, catalyzes the reversible adenylation of nicotinate mononucleotide (NaMN) to nicotinic acid adenine dinucleotide (NaAD). This chain is Probable nicotinate-nucleotide adenylyltransferase, found in Pseudoalteromonas atlantica (strain T6c / ATCC BAA-1087).